The following is a 761-amino-acid chain: Mitochondrial intermediate peptidase (761 aa).

The N-terminal 37 residues, 1-37 (MLIQKILLNKEISRLPRILSILNYTGLRWLSGSSGRN), are a transit peptide targeting the mitochondrion. A Zn(2+)-binding site is contributed by histidine 547. Glutamate 548 is a catalytic residue. Residues histidine 551 and histidine 554 each coordinate Zn(2+).

It belongs to the peptidase M3 family. The cofactor is Zn(2+).

Its subcellular location is the mitochondrion matrix. It carries out the reaction Release of an N-terminal octapeptide as second stage of processing of some proteins imported into the mitochondrion.. In terms of biological role, cleaves proteins, imported into the mitochondrion, to their mature size. While most mitochondrial precursor proteins are processed to the mature form in one step by mitochondrial processing peptidase (MPP), the sequential cleavage by MIP of an octapeptide after initial processing by MPP is a required step for a subgroup of nuclear-encoded precursor proteins destined for the matrix or the inner membrane. This chain is Mitochondrial intermediate peptidase (OCT1), found in Candida glabrata (strain ATCC 2001 / BCRC 20586 / JCM 3761 / NBRC 0622 / NRRL Y-65 / CBS 138) (Yeast).